A 546-amino-acid chain; its full sequence is Probable ATP-dependent RNA helicase DDX56 (546 aa).

Positions 7 to 35 (LGFEHMGLDPRLLQAVTDLGWSRPTLIQE) match the Q motif motif. One can recognise a Helicase ATP-binding domain in the interval 38–218 (IPLALEGKDL…ELVLHNPVTL (181 aa)). 51–58 (ARTGSGKT) is a binding site for ATP. Ser-126 is subject to Phosphoserine. Thr-141 bears the Phosphothreonine mark. The DEAD box motif lies at 166-169 (DEAD). The region spanning 230 to 424 (QLQQFQVVCE…PYQFQMEEIE (195 aa)) is the Helicase C-terminal domain. 2 disordered regions span residues 324–344 (VKGK…PESG) and 508–546 (RKKR…AKPS). Composition is skewed to basic residues over residues 325-334 (KGKRRGRGSK), 508-524 (RKKR…KKVK), and 532-546 (FKHR…AKPS).

Belongs to the DEAD box helicase family. DDX56/DBP9 subfamily. In terms of assembly, may form homooligomeric complexes. Interacts with IRF3. Interacts with OCT4 and POU5F1.

The protein localises to the nucleus. The protein resides in the nucleolus. The enzyme catalyses ATP + H2O = ADP + phosphate + H(+). In terms of biological role, nucleolar RNA helicase that plays a role in various biological processes including innate immunity, ribosome biogenesis or nucleolus organization. Plays an essential role in maintaining nucleolar integrity in planarian stem cells. Maintains embryonic stem cells proliferation by conventional regulation of ribosome assembly and interaction with OCT4 and POU5F1 complex. Regulates antiviral innate immunity by inhibiting the virus-triggered signaling nuclear translocation of IRF3. Mechanistically, acts by disrupting the interaction between IRF3 and importin IPO5. May play a role in later stages of the processing of the pre-ribosomal particles leading to mature 60S ribosomal subunits. Has intrinsic ATPase activity. The sequence is that of Probable ATP-dependent RNA helicase DDX56 (Ddx56) from Mus musculus (Mouse).